The primary structure comprises 450 residues: Methionine aminopeptidase 2 (450 aa).

The disordered stretch occupies residues 1-99 (MAVQAPEVDK…LFPNSQYPEG (99 aa)). Positions 33 to 49 (GDEDAENEESDEDDDQG) are enriched in acidic residues. The segment covering 60 to 75 (KKKRKRKPKKKKKKGV) has biased composition (basic residues). His-200 provides a ligand contact to substrate. Residues Asp-220, Asp-231, and His-300 each contribute to the a divalent metal cation site. His-308 is a substrate binding site. Residues Glu-336 and Glu-431 each coordinate a divalent metal cation.

This sequence belongs to the peptidase M24A family. Methionine aminopeptidase eukaryotic type 2 subfamily. It depends on Co(2+) as a cofactor. Requires Zn(2+) as cofactor. The cofactor is Mn(2+). Fe(2+) is required as a cofactor.

Its subcellular location is the cytoplasm. It carries out the reaction Release of N-terminal amino acids, preferentially methionine, from peptides and arylamides.. Functionally, cotranslationally removes the N-terminal methionine from nascent proteins. The N-terminal methionine is often cleaved when the second residue in the primary sequence is small and uncharged (Met-Ala-, Cys, Gly, Pro, Ser, Thr, or Val). This is Methionine aminopeptidase 2 from Uncinocarpus reesii (strain UAMH 1704).